Consider the following 436-residue polypeptide: UDP-N-acetylglucosamine 1-carboxyvinyltransferase 1 (436 aa).

22–23 (KN) is a binding site for phosphoenolpyruvate. Arg-93 lines the UDP-N-acetyl-alpha-D-glucosamine pocket. Residue Cys-117 is the Proton donor of the active site. 2-(S-cysteinyl)pyruvic acid O-phosphothioketal is present on Cys-117. UDP-N-acetyl-alpha-D-glucosamine contacts are provided by residues 122–126 (RPIDQ), Asp-306, and Val-328.

The protein belongs to the EPSP synthase family. MurA subfamily.

The protein localises to the cytoplasm. It catalyses the reaction phosphoenolpyruvate + UDP-N-acetyl-alpha-D-glucosamine = UDP-N-acetyl-3-O-(1-carboxyvinyl)-alpha-D-glucosamine + phosphate. It participates in cell wall biogenesis; peptidoglycan biosynthesis. Its function is as follows. Cell wall formation. Adds enolpyruvyl to UDP-N-acetylglucosamine. This Bacillus licheniformis (strain ATCC 14580 / DSM 13 / JCM 2505 / CCUG 7422 / NBRC 12200 / NCIMB 9375 / NCTC 10341 / NRRL NRS-1264 / Gibson 46) protein is UDP-N-acetylglucosamine 1-carboxyvinyltransferase 1.